Consider the following 938-residue polypeptide: Inner tegument protein (938 aa).

The segment at Glu-457–Gly-938 is interaction with large tegument protein.

This sequence belongs to the herpesviridae inner tegument protein family. As to quaternary structure, interacts (via C-terminus) with the large tegument protein/LTP (via N-terminus).

It is found in the virion tegument. The protein localises to the host cytoplasm. Its subcellular location is the host nucleus. The protein resides in the host Golgi apparatus. It localises to the host trans-Golgi network. In terms of biological role, plays an essential role in cytoplasmic secondary envelopment during viral egress. Interacts with the capsid via the large tegument protein/LTP and participates in its transport to the host trans-Golgi network (TGN) where secondary envelopment occurs. Modulates tegumentation and capsid accumulation at the viral assembly complex. The sequence is that of Inner tegument protein (U30) from Human herpesvirus 7 (strain JI) (HHV-7).